An 894-amino-acid chain; its full sequence is Protein NLP9 (894 aa).

Residues 517–603 (QEISGARRLE…LDSVQGVEGG (87 aa)) enclose the RWP-RK domain. Positions 578 to 598 (RKINKVNRSLRKIQTVLDSVQ) form a coiled coil. Residues 732-763 (NTRIERGNGTVEPNHSISSSMSDSSNSSGAVL) are disordered. Residues 747–763 (SISSSMSDSSNSSGAVL) are compositionally biased toward low complexity. Positions 792 to 875 (TLTVKATYRE…HTVKFLVRDI (84 aa)) constitute a PB1 domain.

The protein localises to the nucleus. Its function is as follows. Probable transcription factor. The chain is Protein NLP9 (NLP9) from Arabidopsis thaliana (Mouse-ear cress).